The primary structure comprises 486 residues: MTTTKVKTVKNWIDGAWVEASTADTEVVPNPATGEAIAYVPLSGERDVEQAVASAKRAYETWKTVPVPERTRYMFAYLEQLKKNREQLAQLITLENGKTIKDARGEVQRGIECVELATSTPTMMMGDALPDIASGIDGSIWRYPLGVVAGITPFNFPMMVPLWMFPLAIAAGNTFVLKTSERTPLLAEQLVSLMHEVGLPRGVLNLVNGGKAVVNGLLNHPDVEAISFVGSEPVARYVYETGTANGKRVQALAGAKNHAVVLADCELDKTVQGVIGAAFASSGERCMACSVVAVVEEVADAFIEKLTAETKKLTVGNGKNDEHFVGPLIRQSHKDKVVKYIEQGVEQGAELLVDGRNATSEEAGYYLGATLFDHVTPEMTIWQEELFAPVLSIVRVRDLEEAIALTNRSRFANGAVIYTSSGKAAQHFRNAIDAGMVGINVNVPAPMAFFSFAGNKASFFGDLGTNGRDGIQFYTRKKVVTERWFN.

NAD(+) contacts are provided by Phe154, Lys178, Glu181, Arg182, and Ser231. The active-site Nucleophile is Cys286. Glu385 is an NAD(+) binding site.

This sequence belongs to the aldehyde dehydrogenase family. IolA subfamily. Homotetramer.

It catalyses the reaction 3-oxopropanoate + NAD(+) + CoA + H2O = hydrogencarbonate + acetyl-CoA + NADH + H(+). The enzyme catalyses 2-methyl-3-oxopropanoate + NAD(+) + CoA + H2O = propanoyl-CoA + hydrogencarbonate + NADH + H(+). It participates in polyol metabolism; myo-inositol degradation into acetyl-CoA; acetyl-CoA from myo-inositol: step 7/7. Catalyzes the oxidation of malonate semialdehyde (MSA) and methylmalonate semialdehyde (MMSA) into acetyl-CoA and propanoyl-CoA, respectively. Is involved in a myo-inositol catabolic pathway. Bicarbonate, and not CO2, is the end-product of the enzymatic reaction. The chain is Malonate-semialdehyde dehydrogenase 2 from Shouchella clausii (strain KSM-K16) (Alkalihalobacillus clausii).